An 80-amino-acid polypeptide reads, in one-letter code: UPF0248 protein MJ1316 (80 aa).

Belongs to the UPF0248 family.

The protein is UPF0248 protein MJ1316 of Methanocaldococcus jannaschii (strain ATCC 43067 / DSM 2661 / JAL-1 / JCM 10045 / NBRC 100440) (Methanococcus jannaschii).